The following is a 446-amino-acid chain: Xylose isomerase 1 (446 aa).

Residues histidine 109 and aspartate 112 contribute to the active site. Mg(2+) is bound by residues glutamate 240, glutamate 276, histidine 279, aspartate 304, aspartate 315, aspartate 317, and aspartate 347.

It belongs to the xylose isomerase family. As to quaternary structure, homotetramer. The cofactor is Mg(2+).

Its subcellular location is the cytoplasm. It catalyses the reaction alpha-D-xylose = alpha-D-xylulofuranose. In Xanthomonas campestris pv. campestris (strain 8004), this protein is Xylose isomerase 1.